A 264-amino-acid chain; its full sequence is Meiotically up-regulated gene 162 protein (264 aa).

7 helical membrane passes run 18-38 (IVIF…WNLK), 54-74 (LWIY…AGSA), 84-104 (VFQV…GYSF), 140-160 (IISI…LLFL), 174-194 (HLSY…IKLI), 199-219 (FVLG…SLIT), and 223-243 (LISY…IWIY).

The protein localises to the endoplasmic reticulum membrane. Has a role in meiosis. This Schizosaccharomyces pombe (strain 972 / ATCC 24843) (Fission yeast) protein is Meiotically up-regulated gene 162 protein (mug162).